Consider the following 487-residue polypeptide: Probable cytochrome P450 513B1 (487 aa).

Residues 1-18 (MNLLVLSVILAIIIYLIF) form a helical membrane-spanning segment. Residue C433 coordinates heme.

This sequence belongs to the cytochrome P450 family. Heme is required as a cofactor.

Its subcellular location is the membrane. The sequence is that of Probable cytochrome P450 513B1 (cyp513B1) from Dictyostelium discoideum (Social amoeba).